The primary structure comprises 138 residues: ATP synthase epsilon chain (138 aa).

The protein belongs to the ATPase epsilon chain family. As to quaternary structure, F-type ATPases have 2 components, CF(1) - the catalytic core - and CF(0) - the membrane proton channel. CF(1) has five subunits: alpha(3), beta(3), gamma(1), delta(1), epsilon(1). CF(0) has three main subunits: a, b and c.

The protein resides in the cell membrane. Its function is as follows. Produces ATP from ADP in the presence of a proton gradient across the membrane. The sequence is that of ATP synthase epsilon chain from Streptococcus uberis (strain ATCC BAA-854 / 0140J).